Reading from the N-terminus, the 232-residue chain is Enolase-phosphatase E1 (232 aa).

The protein belongs to the HAD-like hydrolase superfamily. MasA/MtnC family. In terms of assembly, monomer. Requires Mg(2+) as cofactor.

The enzyme catalyses 5-methylsulfanyl-2,3-dioxopentyl phosphate + H2O = 1,2-dihydroxy-5-(methylsulfanyl)pent-1-en-3-one + phosphate. The protein operates within amino-acid biosynthesis; L-methionine biosynthesis via salvage pathway; L-methionine from S-methyl-5-thio-alpha-D-ribose 1-phosphate: step 3/6. Its pathway is amino-acid biosynthesis; L-methionine biosynthesis via salvage pathway; L-methionine from S-methyl-5-thio-alpha-D-ribose 1-phosphate: step 4/6. In terms of biological role, bifunctional enzyme that catalyzes the enolization of 2,3-diketo-5-methylthiopentyl-1-phosphate (DK-MTP-1-P) into the intermediate 2-hydroxy-3-keto-5-methylthiopentenyl-1-phosphate (HK-MTPenyl-1-P), which is then dephosphorylated to form the acireductone 1,2-dihydroxy-3-keto-5-methylthiopentene (DHK-MTPene). This chain is Enolase-phosphatase E1, found in Nocardia farcinica (strain IFM 10152).